A 489-amino-acid polypeptide reads, in one-letter code: 3-octaprenyl-4-hydroxybenzoate carboxy-lyase (489 aa).

Asn-172 contacts Mn(2+). Prenylated FMN contacts are provided by residues 175 to 177 (IYR), 189 to 191 (RWL), and 194 to 195 (RG). Mn(2+) is bound at residue Glu-238. The active-site Proton donor is the Asp-287.

It belongs to the UbiD family. As to quaternary structure, homohexamer. Requires prenylated FMN as cofactor. It depends on Mn(2+) as a cofactor.

The protein resides in the cell membrane. The catalysed reaction is a 4-hydroxy-3-(all-trans-polyprenyl)benzoate + H(+) = a 2-(all-trans-polyprenyl)phenol + CO2. Its pathway is cofactor biosynthesis; ubiquinone biosynthesis. Its function is as follows. Catalyzes the decarboxylation of 3-octaprenyl-4-hydroxy benzoate to 2-octaprenylphenol, an intermediate step in ubiquinone biosynthesis. The polypeptide is 3-octaprenyl-4-hydroxybenzoate carboxy-lyase (Salmonella arizonae (strain ATCC BAA-731 / CDC346-86 / RSK2980)).